Consider the following 299-residue polypeptide: AUGMIN subunit 1 (299 aa).

Serine 2 is modified (N-acetylserine). Coiled coils occupy residues 76–96 and 164–184; these read RLKASEYRAQAARIREILESA and RKAIQRLTYLKKILAQLEDDV.

It belongs to the HAUS1 family. Part of the augmin complex composed of 8 subunits. The complex acts on microtubules and interacts with gamma-tubulin in spindles and the phragmoplast. Interacts with AUG3.

Its subcellular location is the cytoplasm. The protein localises to the cytoskeleton. It is found in the spindle. It localises to the phragmoplast. In terms of biological role, involved in microtubules reorganization during spindle and phragmoplast development. The polypeptide is AUGMIN subunit 1 (Arabidopsis thaliana (Mouse-ear cress)).